Reading from the N-terminus, the 1053-residue chain is MKTMRKQIYKKAYWLLLPFLPLALANTFLVKEDSKNVTAYTPFATPITDSKSDLVSLAQLDSSYQIADQTIHNTNLFVLFKSRDVKVKYESSGSNNISFDSTSQGEKPSYVVEFTNSTNIGIKWTMVKKYQLDVPNVSSDMNQVLKNLILEQPLTKYTLNSSLAKEKGKTQREVHLGSGQANQWTSQRNQHDLNNNPSPNASTGFKLTTGNAYRKLSESWPIYEPIDGTKQGKGKDSSGWSSTEENEAKNDAPSVSGGGSSSGTFNKYLNTKQALESIGILFDDQTPRNVITQLYYASTSKLAVTNNHIVVMGNSFLPSMWYWVVERSAQENASNKPTWFANTNLDWGEDKQKQFVENQLGYKETTSTNSHNFHSKSFTQPAYLISGIDSVNDQIIFSGFKAGSVGYDSSSSSSSSSSSSTKDQALAWSTTTSLDSKTGYKDLVTNDTGLNGPINGSFSIQDTFSFVVPYSGNHTNNGTTGPIKTAYPVKKDQKSTVKINSLINATPLNSYGDEGIGVFDALGLNYNFKSNQERLPSRTDQIFVYGIVSPNELRSAKSSADSTGSDTKVNWSNTQSRYLPVPYNYSEGIIDADGFKRPENRGASVTTFSGLKSIAPDGFANSIANFSVGLKAGIDPNPVMSGKKANYGAVVLTRGGVVRLNFNPGNDSLLSTTDNNIAPISFSFTPFTAAESAVDLTTFKEVTYNQESGLWSYIFDSSLKPSHDGKQTPVTDNMGFSVITVSRTGIELNQDQATTTLDVAPSALAVQSGIQSTTQTLTGVLPLSEEFSAVIAKDSDQNKIDIYKNNNGLFEIDTQLSNSVATNNGGLAPSYTENRVDAWGKVEFADNSVLQARNLVDKTVDEIINTPEILNSFFRFTPAFEDQKATLVATKQSDTSLSVSPRIQFLDGNFYDLNSTIAGVPLNIGFPSRVFAGFAALPAWVIPVSVGSSVGILFILLVLGLGIGIPMYRVRKLQDASFVNVFKKVDTLTTAVGSVYKKIITQTGVVKKAPSALKAANPSVKKPAAFLKPPVQPPSKPEGEQKAVEVKSEETKS.

The N-terminal stretch at 1 to 25 (MKTMRKQIYKKAYWLLLPFLPLALA) is a signal peptide. Disordered regions lie at residues 162–207 (SLAK…GFKL) and 224–261 (EPIDGTKQGKGKDSSGWSSTEENEAKNDAPSVSGGGSS). Positions 164-175 (AKEKGKTQREVH) are enriched in basic and acidic residues. A compositionally biased stretch (polar residues) spans 179–207 (GQANQWTSQRNQHDLNNNPSPNASTGFKL). The chain crosses the membrane as a helical span at residues 946-966 (VGSSVGILFILLVLGLGIGIP). The segment at 1024–1053 (AAFLKPPVQPPSKPEGEQKAVEVKSEETKS) is disordered. Over residues 1037–1053 (PEGEQKAVEVKSEETKS) the composition is skewed to basic and acidic residues.

It localises to the cell membrane. This chain is Mgp-operon protein 3, found in Mycoplasma genitalium (strain ATCC 33530 / DSM 19775 / NCTC 10195 / G37) (Mycoplasmoides genitalium).